The chain runs to 392 residues: Formate-dependent phosphoribosylglycinamide formyltransferase (392 aa).

N(1)-(5-phospho-beta-D-ribosyl)glycinamide is bound by residues 20 to 21 (EL) and Glu-80. ATP is bound by residues Arg-112, Lys-153, 158–163 (SSGKGQ), 193–196 (EEFI), and Glu-201. The ATP-grasp domain occupies 117–306 (RLAAEELGLP…EFELHVRAIL (190 aa)). Glu-265 and Glu-277 together coordinate Mg(2+). Residues Asp-284, Lys-354, and 361-362 (RR) contribute to the N(1)-(5-phospho-beta-D-ribosyl)glycinamide site.

This sequence belongs to the PurK/PurT family. As to quaternary structure, homodimer.

The enzyme catalyses N(1)-(5-phospho-beta-D-ribosyl)glycinamide + formate + ATP = N(2)-formyl-N(1)-(5-phospho-beta-D-ribosyl)glycinamide + ADP + phosphate + H(+). Its pathway is purine metabolism; IMP biosynthesis via de novo pathway; N(2)-formyl-N(1)-(5-phospho-D-ribosyl)glycinamide from N(1)-(5-phospho-D-ribosyl)glycinamide (formate route): step 1/1. Functionally, involved in the de novo purine biosynthesis. Catalyzes the transfer of formate to 5-phospho-ribosyl-glycinamide (GAR), producing 5-phospho-ribosyl-N-formylglycinamide (FGAR). Formate is provided by PurU via hydrolysis of 10-formyl-tetrahydrofolate. This is Formate-dependent phosphoribosylglycinamide formyltransferase from Geobacter metallireducens (strain ATCC 53774 / DSM 7210 / GS-15).